The sequence spans 335 residues: Acetyl-coenzyme A carboxylase carboxyl transferase subunit alpha (335 aa).

Residues 48 to 308 form the CoA carboxyltransferase C-terminal domain; that stretch reads TLELKVDALR…KEILIEELKA (261 aa).

It belongs to the AccA family. In terms of assembly, acetyl-CoA carboxylase is a heterohexamer composed of biotin carboxyl carrier protein (AccB), biotin carboxylase (AccC) and two subunits each of ACCase subunit alpha (AccA) and ACCase subunit beta (AccD).

Its subcellular location is the cytoplasm. It carries out the reaction N(6)-carboxybiotinyl-L-lysyl-[protein] + acetyl-CoA = N(6)-biotinyl-L-lysyl-[protein] + malonyl-CoA. It participates in lipid metabolism; malonyl-CoA biosynthesis; malonyl-CoA from acetyl-CoA: step 1/1. Its function is as follows. Component of the acetyl coenzyme A carboxylase (ACC) complex. First, biotin carboxylase catalyzes the carboxylation of biotin on its carrier protein (BCCP) and then the CO(2) group is transferred by the carboxyltransferase to acetyl-CoA to form malonyl-CoA. The sequence is that of Acetyl-coenzyme A carboxylase carboxyl transferase subunit alpha from Pelodictyon phaeoclathratiforme (strain DSM 5477 / BU-1).